The primary structure comprises 152 residues: Transcriptional regulator MraZ (152 aa).

SpoVT-AbrB domains are found at residues 5 to 52 and 81 to 124; these read ASAI…PLQE and AHEC…DEAA.

The protein belongs to the MraZ family. In terms of assembly, forms oligomers.

The protein localises to the cytoplasm. Its subcellular location is the nucleoid. This is Transcriptional regulator MraZ from Shewanella denitrificans (strain OS217 / ATCC BAA-1090 / DSM 15013).